The primary structure comprises 391 residues: Somatostatin receptor type 1 (391 aa).

Residues 1–50 are disordered; that stretch reads MFPNGTAPSPTSSPSSSPGGCGEGVCSRGPGSGAADGMEEPGRNSSQNGT. Topologically, residues 1 to 56 are extracellular; sequence MFPNGTAPSPTSSPSSSPGGCGEGVCSRGPGSGAADGMEEPGRNSSQNGTLSEGQG. Asn-4 is a glycosylation site (N-linked (GlcNAc...) asparagine). A compositionally biased stretch (low complexity) spans 8–18; that stretch reads PSPTSSPSSSP. N-linked (GlcNAc...) asparagine glycans are attached at residues Asn-44 and Asn-48. Residues 57–84 form a helical membrane-spanning segment; it reads SAILISFIYSVVCLVGLCGNSMVIYVIL. Over 85-94 the chain is Cytoplasmic; that stretch reads RYAKMKTATN. Residues 95 to 120 form a helical membrane-spanning segment; it reads IYILNLAIADELLMLSVPFLVTSTLL. Topologically, residues 121 to 131 are extracellular; that stretch reads RHWPFGALLCR. Cys-130 and Cys-208 are disulfide-bonded. Residues 132-153 form a helical membrane-spanning segment; the sequence is LVLSVDAVNMFTSIYCLTVLSV. Residues 154–175 are Cytoplasmic-facing; it reads DRYVAVVHPIKAARYRRPTVAK. A helical transmembrane segment spans residues 176–196; the sequence is VVNLGVWVLSLLVILPIVVFS. Over 197 to 219 the chain is Extracellular; the sequence is RTAANSDGTVACNMLMPEPAQRW. The helical transmembrane segment at 220 to 244 threads the bilayer; sequence LVGFVLYTFLMGFLLPVGAICLCYV. The Cytoplasmic segment spans residues 245 to 270; that stretch reads LIIAKMRMVALKAGWQQRKRSERKIT. Residues 271-296 traverse the membrane as a helical segment; it reads LMVMMVVMVFVICWMPFYVVQLVNVF. Topologically, residues 297-303 are extracellular; that stretch reads AEQDDAT. Residues 304–327 form a helical membrane-spanning segment; it reads VSQLSVILGYANSCANPILYGFLS. At 328-391 the chain is on the cytoplasmic side; the sequence is DNFKRSFQRI…GTCASRISTL (64 aa). Cys-339 carries the S-palmitoyl cysteine lipid modification.

Belongs to the G-protein coupled receptor 1 family. In terms of tissue distribution, brain, pituitary, islet, jejunum, stomach, heart, spleen.

The protein resides in the cell membrane. Receptor for somatostatin with higher affinity for somatostatin-14 than -28. This receptor is coupled to phosphotyrosine phosphatase and Na(+)/H(+) exchanger via pertussis toxin insensitive G proteins. This Rattus norvegicus (Rat) protein is Somatostatin receptor type 1 (Sstr1).